Here is a 727-residue protein sequence, read N- to C-terminus: Anaphase-promoting complex subunit 5 (727 aa).

Phosphoserine is present on Ser180. TPR repeat units follow at residues 194–234 (QKQA…FNPD), 235–285 (FAEA…GRSL), 286–322 (RYAA…SNDH), 323–359 (VCLQ…FGLP), 360–390 (RAFA…SELI), 391–438 (DISI…TESF), 439–472 (AVAL…FPPN), 473–512 (SQHA…ALNG), 513–552 (IEGV…TEMV), 553–592 (ISVL…QYLA), 593–632 (SETV…ILDK), 633–668 (GRAM…NLTE), and 669–708 (AKNY…CAMV). Thr217 is modified (phosphothreonine).

The protein belongs to the APC5 family. The mammalian APC/C is composed at least of 14 distinct subunits ANAPC1, ANAPC2, CDC27/APC3, ANAPC4, ANAPC5, CDC16/APC6, ANAPC7, CDC23/APC8, ANAPC10, ANAPC11, CDC26/APC12, ANAPC13, ANAPC15 and ANAPC16 that assemble into a complex of at least 19 chains with a combined molecular mass of around 1.2 MDa; APC/C interacts with FZR1 and FBXO5.

The protein resides in the nucleus. The protein localises to the cytoplasm. Its subcellular location is the cytoskeleton. It localises to the spindle. It functions in the pathway protein modification; protein ubiquitination. Component of the anaphase promoting complex/cyclosome (APC/C), a cell cycle-regulated E3 ubiquitin ligase that controls progression through mitosis and the G1 phase of the cell cycle. The APC/C complex acts by mediating ubiquitination and subsequent degradation of target proteins: it mainly mediates the formation of 'Lys-11'-linked polyubiquitin chains and, to a lower extent, the formation of 'Lys-48'- and 'Lys-63'-linked polyubiquitin chains. The APC/C complex catalyzes assembly of branched 'Lys-11'-/'Lys-48'-linked branched ubiquitin chains on target proteins. The polypeptide is Anaphase-promoting complex subunit 5 (Anapc5) (Rattus norvegicus (Rat)).